Consider the following 752-residue polypeptide: Translation initiation factor IF-2 (752 aa).

The tract at residues 26–167 is disordered; that stretch reads RQGMGVKSHM…QPTQRKDKPL (142 aa). The span at 34–47 shows a compositional bias: polar residues; the sequence is HMSSVTPDQAQQLR. Positions 72 to 81 are enriched in low complexity; that stretch reads KQNNHQAQNH. The span at 83 to 96 shows a compositional bias: basic and acidic residues; sequence QHHDHDKTQNERPQ. Polar residues predominate over residues 101–129; that stretch reads SRSNNGTKDNNQHQNNGGRFGGSLNNDQG. Basic residues predominate over residues 131–150; that stretch reads NGKRFNKKNKKNKKHNKNKR. A compositionally biased stretch (basic and acidic residues) spans 151–167; sequence LREVAHKQPTQRKDKPL. One can recognise a tr-type G domain in the interval 253-422; that stretch reads TRPAVVTVMG…LLQAEMLELK (170 aa). Positions 262 to 269 are G1; sequence GHVDHGKT. 262–269 contributes to the GTP binding site; it reads GHVDHGKT. The G2 stretch occupies residues 287 to 291; that stretch reads GITQE. The tract at residues 308-311 is G3; that stretch reads DTPG. Residues 308–312 and 362–365 contribute to the GTP site; these read DTPGH and NKID. Positions 362 to 365 are G4; it reads NKID. The segment at 398–400 is G5; the sequence is SAK.

This sequence belongs to the TRAFAC class translation factor GTPase superfamily. Classic translation factor GTPase family. IF-2 subfamily.

The protein localises to the cytoplasm. Functionally, one of the essential components for the initiation of protein synthesis. Protects formylmethionyl-tRNA from spontaneous hydrolysis and promotes its binding to the 30S ribosomal subunits. Also involved in the hydrolysis of GTP during the formation of the 70S ribosomal complex. This is Translation initiation factor IF-2 from Limosilactobacillus reuteri (strain DSM 20016) (Lactobacillus reuteri).